Consider the following 440-residue polypeptide: Beta-1,3-galactosyl-O-glycosyl-glycoprotein beta-1,6-N-acetylglucosaminyltransferase (440 aa).

At 1–12 (MKMAGWKKKLCR) the chain is on the cytoplasmic side. A helical; Signal-anchor for type II membrane protein transmembrane segment spans residues 13 to 30 (GHHLWALGCYMLLAVVSL). Residues 31–440 (RLSLRFKCDV…RHKAIYGTEL (410 aa)) lie on the Lumenal side of the membrane. 2 N-linked (GlcNAc...) asparagine; by host glycosylation sites follow: Asn72 and Asn108. 4 cysteine pairs are disulfide-bonded: Cys73–Cys230, Cys164–Cys384, Cys185–Cys212, and Cys393–Cys425.

This sequence belongs to the glycosyltransferase 14 family.

The protein localises to the host Golgi apparatus membrane. The catalysed reaction is a 3-O-[beta-D-galactosyl-(1-&gt;3)-N-acetyl-alpha-D-galactosaminyl]-L-seryl-[protein] + UDP-N-acetyl-alpha-D-glucosamine = 3-O-{beta-D-galactosyl-(1-&gt;3)-[N-acetyl-beta-D-glucosaminyl-(1-&gt;6)]-N-acetyl-alpha-D-galactosaminyl}-L-seryl-[protein] + UDP + H(+). It catalyses the reaction a 3-O-[beta-D-galactosyl-(1-&gt;3)-N-acetyl-alpha-D-galactosaminyl]-L-threonyl-[protein] + UDP-N-acetyl-alpha-D-glucosamine = a 3-O-{beta-D-galactosyl-(1-&gt;3)-[N-acetyl-beta-D-glucosaminyl-(1-&gt;6)]-N-acetyl-alpha-D-galactosaminyl}-L-threonyl-[protein] + UDP + H(+). The enzyme catalyses a beta-D-Gal-(1-&gt;4)-beta-D-GlcNAc-(1-&gt;3)-beta-D-Gal-(1-&gt;4)-beta-D-GlcNAc derivative + UDP-N-acetyl-alpha-D-glucosamine = a beta-D-Gal-(1-&gt;4)-beta-D-GlcNAc-(1-&gt;3)-[beta-D-GlcNAc-(1-&gt;6)]-beta-D-Gal-(1-&gt;4)-N-acetyl-beta-D-glucosaminyl derivative + UDP + H(+). It carries out the reaction 3-O-[N-acetyl-beta-D-glucosaminyl-(1-&gt;3)-N-acetyl-alpha-D-galactosaminyl]-L-seryl-[protein] + UDP-N-acetyl-alpha-D-glucosamine = 3-O-[N-acetyl-beta-D-glucosaminyl-(1-&gt;3)-[N-acetyl-beta-D-glucosaminyl-(1-&gt;6)]-N-acetyl-alpha-D-galactosaminyl]-L-seryl-[protein] + UDP + H(+). The catalysed reaction is a 3-O-[N-acetyl-beta-D-glucosaminyl-(1-&gt;3)-N-acetyl-alpha-D-galactosaminyl]-L-threonyl-[protein] + UDP-N-acetyl-alpha-D-glucosamine = 3-O-[N-acetyl-beta-D-glucosaminyl-(1-&gt;3)-[N-acetyl-beta-D-glucosaminyl-(1-&gt;6)]-N-acetyl-alpha-D-galactosaminyl]-L-threonyl-[protein] + UDP + H(+). It functions in the pathway protein modification; protein glycosylation. Its function is as follows. Non-essential glycosyltransferase that can synthesize all known mucin beta 6 N-acetylglucosaminides. Mediates core 2 and core 4 O-glycan branching, 2 important steps in mucin-type biosynthesis. Has also I-branching enzyme activity by converting linear into branched poly-N-acetyllactosaminoglycans. Contributes to the post-translational modifications of structural proteins. The protein is Beta-1,3-galactosyl-O-glycosyl-glycoprotein beta-1,6-N-acetylglucosaminyltransferase (Bo17) of Bos taurus (Bovine).